Consider the following 40-residue polypeptide: Photosystem II reaction center protein L (40 aa).

A helical transmembrane segment spans residues Ser19–Phe39.

This sequence belongs to the PsbL family. As to quaternary structure, PSII is composed of 1 copy each of membrane proteins PsbA, PsbB, PsbC, PsbD, PsbE, PsbF, PsbH, PsbI, PsbJ, PsbK, PsbL, PsbM, PsbT, PsbX, PsbY, PsbZ, Psb30/Ycf12, peripheral proteins PsbO, CyanoQ (PsbQ), PsbU, PsbV and a large number of cofactors. It forms dimeric complexes.

It localises to the cellular thylakoid membrane. One of the components of the core complex of photosystem II (PSII). PSII is a light-driven water:plastoquinone oxidoreductase that uses light energy to abstract electrons from H(2)O, generating O(2) and a proton gradient subsequently used for ATP formation. It consists of a core antenna complex that captures photons, and an electron transfer chain that converts photonic excitation into a charge separation. This subunit is found at the monomer-monomer interface and is required for correct PSII assembly and/or dimerization. In Synechococcus elongatus (strain ATCC 33912 / PCC 7942 / FACHB-805) (Anacystis nidulans R2), this protein is Photosystem II reaction center protein L.